Reading from the N-terminus, the 363-residue chain is Cytochrome b (363 aa).

Helical transmembrane passes span 23–43 (FGFILGILLVLQIISGLMLSF), 67–89 (WFVRLYHSFGVSFYFFFMFLHIM), 102–122 (SWYSGVVIFVLSIATAFVGYV), and 164–184 (FFSIHVILPVIILLVVIFHLY). Positions 73 and 87 each coordinate heme b. His168 and His182 together coordinate heme b. His187 lines the a ubiquinone pocket. 4 helical membrane-spanning segments follow: residues 210–230 (VLFSDIRFIVIVILLIGVQSG), 271–291 (VFPTKVAGLLAMAGMLELLVL), 310–330 (VWTTSSVPLVPVLFMLGSIGK), and 332–352 (VVHVDLIAIGTCVVLSVVLFI).

This sequence belongs to the cytochrome b family. The main subunits of complex b-c1 are: cytochrome b, cytochrome c1 and the Rieske protein. Heme b is required as a cofactor.

The protein resides in the mitochondrion inner membrane. In terms of biological role, component of the ubiquinol-cytochrome c reductase complex (complex III or cytochrome b-c1 complex) that is part of the mitochondrial respiratory chain. The b-c1 complex mediates electron transfer from ubiquinol to cytochrome c. Contributes to the generation of a proton gradient across the mitochondrial membrane that is then used for ATP synthesis. The protein is Cytochrome b (MT-CYB) of Theileria annulata.